Here is a 407-residue protein sequence, read N- to C-terminus: Phosphopentomutase (407 aa).

Residues D10, D306, H311, D347, H348, and H359 each contribute to the Mn(2+) site.

Belongs to the phosphopentomutase family. It depends on Mn(2+) as a cofactor.

It is found in the cytoplasm. The enzyme catalyses 2-deoxy-alpha-D-ribose 1-phosphate = 2-deoxy-D-ribose 5-phosphate. The catalysed reaction is alpha-D-ribose 1-phosphate = D-ribose 5-phosphate. It functions in the pathway carbohydrate degradation; 2-deoxy-D-ribose 1-phosphate degradation; D-glyceraldehyde 3-phosphate and acetaldehyde from 2-deoxy-alpha-D-ribose 1-phosphate: step 1/2. In terms of biological role, isomerase that catalyzes the conversion of deoxy-ribose 1-phosphate (dRib-1-P) and ribose 1-phosphate (Rib-1-P) to deoxy-ribose 5-phosphate (dRib-5-P) and ribose 5-phosphate (Rib-5-P), respectively. The chain is Phosphopentomutase from Erwinia tasmaniensis (strain DSM 17950 / CFBP 7177 / CIP 109463 / NCPPB 4357 / Et1/99).